A 143-amino-acid chain; its full sequence is Sperm mitochondrial-associated cysteine-rich protein (143 aa).

S37, S44, and S110 each carry phosphoserine. Residues C101–K143 form a disordered region. Over residues D113–P126 the composition is skewed to polar residues. Position 128 is a phosphoserine (S128). The segment covering G134–K143 has biased composition (polar residues).

In terms of tissue distribution, testis. Is selectively expressed in the spermatids of seminiferous tubules.

It localises to the cytoplasm. The protein localises to the mitochondrion membrane. Involved in sperm motility. Its absence is associated with genetic background dependent male infertility. Infertility may be due to reduced sperm motility in the female reproductive tract and inability to penetrate the oocyte zona pellucida. This Mus musculus (Mouse) protein is Sperm mitochondrial-associated cysteine-rich protein (Smcp).